The sequence spans 339 residues: Ketol-acid reductoisomerase (NADP(+)) (339 aa).

One can recognise a KARI N-terminal Rossmann domain in the interval 1–182 (MRVYYDRDAD…GGGRAGIIET (182 aa)). Residues 24–27 (YGSQ), R48, S51, S53, and 83–86 (DELQ) contribute to the NADP(+) site. The active site involves H108. G134 serves as a coordination point for NADP(+). In terms of domain architecture, KARI C-terminal knotted spans 183–328 (TFKEECETDL…AKLRDMMPWI (146 aa)). Mg(2+) contacts are provided by D191, E195, E227, and E231. S252 serves as a coordination point for substrate.

It belongs to the ketol-acid reductoisomerase family. It depends on Mg(2+) as a cofactor.

The enzyme catalyses (2R)-2,3-dihydroxy-3-methylbutanoate + NADP(+) = (2S)-2-acetolactate + NADPH + H(+). It catalyses the reaction (2R,3R)-2,3-dihydroxy-3-methylpentanoate + NADP(+) = (S)-2-ethyl-2-hydroxy-3-oxobutanoate + NADPH + H(+). The protein operates within amino-acid biosynthesis; L-isoleucine biosynthesis; L-isoleucine from 2-oxobutanoate: step 2/4. Its pathway is amino-acid biosynthesis; L-valine biosynthesis; L-valine from pyruvate: step 2/4. Its function is as follows. Involved in the biosynthesis of branched-chain amino acids (BCAA). Catalyzes an alkyl-migration followed by a ketol-acid reduction of (S)-2-acetolactate (S2AL) to yield (R)-2,3-dihydroxy-isovalerate. In the isomerase reaction, S2AL is rearranged via a Mg-dependent methyl migration to produce 3-hydroxy-3-methyl-2-ketobutyrate (HMKB). In the reductase reaction, this 2-ketoacid undergoes a metal-dependent reduction by NADPH to yield (R)-2,3-dihydroxy-isovalerate. This is Ketol-acid reductoisomerase (NADP(+)) from Bradyrhizobium diazoefficiens (strain JCM 10833 / BCRC 13528 / IAM 13628 / NBRC 14792 / USDA 110).